We begin with the raw amino-acid sequence, 199 residues long: Small ribosomal subunit protein uS4 (199 aa).

In terms of domain architecture, S4 RNA-binding spans 91–154 (SRLDNVVYRL…KDLIIVKEAL (64 aa)).

Belongs to the universal ribosomal protein uS4 family. In terms of assembly, part of the 30S ribosomal subunit. Contacts protein S5. The interaction surface between S4 and S5 is involved in control of translational fidelity.

One of the primary rRNA binding proteins, it binds directly to 16S rRNA where it nucleates assembly of the body of the 30S subunit. In terms of biological role, with S5 and S12 plays an important role in translational accuracy. The chain is Small ribosomal subunit protein uS4 from Phytoplasma mali (strain AT).